The chain runs to 570 residues: Ribosome-inactivating protein SNAI (570 aa).

Residues 1-28 (MRLVAKLLYLAVLAICGLGIHGALTHPR) form the signal peptide. N-linked (GlcNAc...) asparagine glycans are attached at residues N40, N62, and N144. E199 is a catalytic residue. N-linked (GlcNAc...) asparagine glycosylation is present at N260. 3 cysteine pairs are disulfide-bonded: C284/C316, C332/C351, and C373/C385. Ricin B-type lectin domains are found at residues 319–439 (VEVT…WTVG) and 441–566 (VEPL…WITT). The stretch at 329-369 (DGLCVDVRYGHYIDGNPVQLRPCGNECNQLWTFRTDGTIRW) is one 1-alpha repeat. Residues 370–405 (LGKCLTASSSVMIYDCNTVPPEATKWVVSIDGTITN) form a 1-beta repeat. A 1-gamma repeat occupies 408–440 (SGLVLTAPQAAEGTALSLENNIHAARQGWTVGD). The 2-alpha repeat unit spans residues 452–489 (KQMCLRENGENNFVWLEDCVLNRVQQEWALYGDGTIRV). A disulfide bond links C455 and C470. The N-linked (GlcNAc...) asparagine glycan is linked to N492. The 2-beta repeat unit spans residues 493–531 (RSLCVTSEDHEPSDLIVILKCEGSGNQRWVFNTNGTISN). C496 and C513 are disulfide-bonded. A glycan (N-linked (GlcNAc...) asparagine) is linked at N526. Residues 534–567 (AKLLMDVAQRDVSLRKIILYRPTGNPNQQWITTT) form a 2-gamma repeat.

This sequence belongs to the ribosome-inactivating protein family. Type 2 RIP subfamily. Tetramer of four pairs of disulfide bound A-B chains. In terms of processing, the precursor is processed in two chains, A and B, that are linked by a disulfide bond. A small truncated form corresponding roughly to the second ricin B-type lectin domain of the B chain, TrSNAI, can also be produced. Post-translationally, glycosylated. N-glycans of subunit A are (Man)2-3(Xyl)(GlcNAc)2(Fuc) at Asn-40, (GlcNAc)0-2(Man)3(Xyl)(GlcNAc)2(Fuc) or (Man)1-2(GlcNAc)2 at Asn-62, (Man)3(Xyl)(GlcNAc)2(Fuc)0-1 at Asn-144 and (GlcNAc)0-1(Man)3(Xyl)(GlcNAc)2(Fuc) at Asn-260. N-glycans of subunit B are (Man)3(Xyl)(GlcNAc)2(Fuc) at Asn-492 and (Man)6-9(GlcNAc)2 at Asn-526. As to expression, expressed in bark.

It carries out the reaction Endohydrolysis of the N-glycosidic bond at one specific adenosine on the 28S rRNA.. Functionally, neu5Ac(alpha2-6)Gal/GalNAc specific agglutinin. Behaves as a type-2 ribosome-inactivating protein. Strongly inhibits mammalian but not plant ribosomes. The A chain is responsible for inhibiting protein synthesis through the catalytic inactivation of 60S ribosomal subunits by removing adenine from position 4,324 of 28S rRNA. The B chain binds to cell receptors and probably facilitates the entry into the cell of the A chain; B chains are also responsible for cell agglutination (lectin activity). Involved in plant defense against insects. Its function is as follows. Binds Neu5Ac(alpha2-6)Gal/GalNAc but has no clear agglutination activity. The polypeptide is Ribosome-inactivating protein SNAI (Sambucus nigra (European elder)).